A 278-amino-acid polypeptide reads, in one-letter code: Secoisolariciresinol dehydrogenase (278 aa).

NAD(+)-binding positions include 23–28 (GGAGGI), aspartate 47, valine 73, and asparagine 99. Substrate contacts are provided by serine 104 and serine 164. The Proton donor/acceptor role is filled by tyrosine 167. Positions 171 and 200 each coordinate NAD(+).

It belongs to the short-chain dehydrogenases/reductases (SDR) family. As to quaternary structure, homotetramer. As to expression, mostly expressed in stems and rhizomes, and, to a lower extent, in leaves.

It catalyses the reaction (-)-secoisolariciresinol + 2 NAD(+) = (-)-matairesinol + 2 NADH + 2 H(+). It functions in the pathway aromatic compound metabolism; phenylpropanoid biosynthesis. Functionally, oxidoreductase involved in lignan biosynthesis. Also involved in the biosynthesis of etoposide, a chemotherapeutic compound of the topoisomerase inhibitor family. Catalyzes the stereospecific conversion of (-)-secoisolariciresinol to (-)-matairesinol via a lactol intermediate. This chain is Secoisolariciresinol dehydrogenase, found in Sinopodophyllum hexandrum (Himalayan may apple).